Reading from the N-terminus, the 695-residue chain is Highly divergent homeobox (695 aa).

2 consecutive DNA-binding regions (homeobox) follow at residues 3–63 (LRSV…SSKS) and 440–503 (ALQD…RLMG). The tract at residues 56 to 81 (RRKMSSKSALESGGAPPGTAHTAPSV) is disordered. The tract at residues 653-695 (QQALLSDLPPELEEMDFNHTSPEPDDTSFSLSSLSEKNASDSL) is disordered. Over residues 679 to 695 (TSFSLSSLSEKNASDSL) the composition is skewed to polar residues.

Its subcellular location is the nucleus. The sequence is that of Highly divergent homeobox (HDX) from Gallus gallus (Chicken).